Reading from the N-terminus, the 243-residue chain is E3 ubiquitin-protein ligase RMA3 (243 aa).

An RING-type zinc finger spans residues 44–92 (CNICLDTAHDPVVTLCGHLFCWPCIYKWLHVQLSSVSVDQHQNNCPVCK). A disordered region spans residues 110-135 (SPSSTFGSKKQDALSTDIPRRPAPSA). A helical; Anchor for type IV membrane protein transmembrane segment spans residues 223 to 243 (KSLNRVSIFFLCCIILCLLLF).

Ubiquitous. Highly expressed in roots.

It localises to the endoplasmic reticulum membrane. It carries out the reaction S-ubiquitinyl-[E2 ubiquitin-conjugating enzyme]-L-cysteine + [acceptor protein]-L-lysine = [E2 ubiquitin-conjugating enzyme]-L-cysteine + N(6)-ubiquitinyl-[acceptor protein]-L-lysine.. It functions in the pathway protein modification; protein ubiquitination. E3 ubiquitin-protein ligase. The sequence is that of E3 ubiquitin-protein ligase RMA3 (RMA3) from Arabidopsis thaliana (Mouse-ear cress).